Here is a 145-residue protein sequence, read N- to C-terminus: D-aminoacyl-tRNA deacylase (145 aa).

Residues 137 to 138 carry the Gly-cisPro motif, important for rejection of L-amino acids motif; it reads GP.

It belongs to the DTD family. In terms of assembly, homodimer.

Its subcellular location is the cytoplasm. It carries out the reaction glycyl-tRNA(Ala) + H2O = tRNA(Ala) + glycine + H(+). It catalyses the reaction a D-aminoacyl-tRNA + H2O = a tRNA + a D-alpha-amino acid + H(+). In terms of biological role, an aminoacyl-tRNA editing enzyme that deacylates mischarged D-aminoacyl-tRNAs. Also deacylates mischarged glycyl-tRNA(Ala), protecting cells against glycine mischarging by AlaRS. Acts via tRNA-based rather than protein-based catalysis; rejects L-amino acids rather than detecting D-amino acids in the active site. By recycling D-aminoacyl-tRNA to D-amino acids and free tRNA molecules, this enzyme counteracts the toxicity associated with the formation of D-aminoacyl-tRNA entities in vivo and helps enforce protein L-homochirality. This chain is D-aminoacyl-tRNA deacylase, found in Shewanella woodyi (strain ATCC 51908 / MS32).